The primary structure comprises 290 residues: Short chain dehydrogenase/reductase nsrO (290 aa).

The NADP(+) site is built by Ile-37 and Lys-149. Residues Ser-168 and Tyr-182 each act as proton donor in the active site. Residues Tyr-182, Lys-186, and Thr-221 each coordinate NADP(+). Lys-186 (lowers pKa of active site Tyr) is an active-site residue.

Belongs to the short-chain dehydrogenases/reductases (SDR) family.

Its pathway is secondary metabolite biosynthesis. In terms of biological role, short chain dehydrogenase/reductase; part of the gene cluster that mediates the biosynthesis of the tetrahydroxanthone dimer neosartorin, which exhibits antibacterial activity. The two different monomeric units appear to be synthesized by the same set of enzymes, among which the Baeyer-Villiger monooxygenase nsrF is the key enzyme for the divergence of the biosynthetic routes. The pathway begins with the synthesis of atrochrysone thioester by the polyketide synthase nsrB. The atrochrysone carboxyl ACP thioesterase nsrC then breaks the thioester bond and releases the atrochrysone carboxylic acid from AacuL. Atrochrysone carboxylic acid is decarboxylated by the decarboxylase nsrE, and oxidized by the anthrone oxygenase nsrD to yield emodin. Emodin is then reduced to emodin hydroquinone by the oxidoreductase nsrR. A-ring reduction by the short chain dehydrogenase nsrJ, dehydration by the scytalone dehydratase-like protein nsrI and probable spontaneous re-oxidation, results in overall deoxygenation to chrysophanol. The Baeyer-Villiger monooxygenase nsrF accepts chrysophanol as a substrate to insert one oxygen atom at two different positions to yield the precursors of both monomric units. NsrF is promiscuous/flexible in interacting with the 2 (non methylated and methylated) aromatic rings of chrysophanol, thus diverging the biosynthetic pathway at this point. After the hydrolysis of the lactones, methylesterification by the methyltransferase nsrG yields respectively moniliphenone and 2,2',6'-trihydroxy-4-methyl-6-methoxya-cyldiphenylmethanone. The next steps are the hydroxylation by the FAD-dependent monooxygenase nsrK, followed by isomerization by the monooxygenase nsrQ. The short chain dehydrogenase/reductase nsrO then catalyzes the C-5 ketoreduction to give the xanthone skeleton of blennolide C and 5-acetylblennolide A. The acetyltransferase nsrL has a strict substrate specificity and uses only blennolide A but not blennolide C to yield 5-acetylblennolide A as the single-acetylated product. In the final step of the biosynthesis, the heterodimerization of the 2 xanthones, blennolide C and 5-acetylblennolide A, is catalyzed by the cytochrome P450 monooxygenase nsrP. NsrP can utilize at least three different xanthones as its substrates to perform the dimerization reaction. The polypeptide is Short chain dehydrogenase/reductase nsrO (Aspergillus novofumigatus (strain IBT 16806)).